The chain runs to 287 residues: Ribosomal RNA small subunit methyltransferase A (287 aa).

Asn-28, Leu-30, Gly-55, Glu-77, Asp-103, and Asn-123 together coordinate S-adenosyl-L-methionine.

This sequence belongs to the class I-like SAM-binding methyltransferase superfamily. rRNA adenine N(6)-methyltransferase family. RsmA subfamily.

It localises to the cytoplasm. The catalysed reaction is adenosine(1518)/adenosine(1519) in 16S rRNA + 4 S-adenosyl-L-methionine = N(6)-dimethyladenosine(1518)/N(6)-dimethyladenosine(1519) in 16S rRNA + 4 S-adenosyl-L-homocysteine + 4 H(+). Functionally, specifically dimethylates two adjacent adenosines (A1518 and A1519) in the loop of a conserved hairpin near the 3'-end of 16S rRNA in the 30S particle. May play a critical role in biogenesis of 30S subunits. The polypeptide is Ribosomal RNA small subunit methyltransferase A (Rhodopseudomonas palustris (strain TIE-1)).